A 328-amino-acid polypeptide reads, in one-letter code: Nitrilase (328 aa).

The CN hydrolase domain occupies 9 to 286; sequence VRVAAIQAEP…EGILYANVDV (278 aa). Residue glutamate 49 is the Proton acceptor of the active site. Residue lysine 131 is part of the active site. Cysteine 166 functions as the Nucleophile in the catalytic mechanism.

It belongs to the carbon-nitrogen hydrolase superfamily. Nitrilase family.

The catalysed reaction is a nitrile + 2 H2O = a carboxylate + NH4(+). Its function is as follows. Nitrilase that hydrolyzes preferentially 4-cyanopyridine. Is also able to hydrolyze some aliphatic nitriles, such as (R,S)-mandelonitrile. This Penicillium rubens (strain ATCC 28089 / DSM 1075 / NRRL 1951 / Wisconsin 54-1255) (Penicillium chrysogenum) protein is Nitrilase.